A 438-amino-acid polypeptide reads, in one-letter code: Trigger factor (438 aa).

In terms of domain architecture, PPIase FKBP-type spans 160–245 (DDKVTIDFVG…VKKIQQAELP (86 aa)).

Belongs to the FKBP-type PPIase family. Tig subfamily.

The protein localises to the cytoplasm. The catalysed reaction is [protein]-peptidylproline (omega=180) = [protein]-peptidylproline (omega=0). In terms of biological role, involved in protein export. Acts as a chaperone by maintaining the newly synthesized protein in an open conformation. Functions as a peptidyl-prolyl cis-trans isomerase. In Francisella tularensis subsp. holarctica (strain OSU18), this protein is Trigger factor.